The primary structure comprises 178 residues: Crossover junction endodeoxyribonuclease RuvC (178 aa).

Catalysis depends on residues aspartate 8, glutamate 72, and aspartate 144. Aspartate 8, glutamate 72, and aspartate 144 together coordinate Mg(2+).

The protein belongs to the RuvC family. Homodimer which binds Holliday junction (HJ) DNA. The HJ becomes 2-fold symmetrical on binding to RuvC with unstacked arms; it has a different conformation from HJ DNA in complex with RuvA. In the full resolvosome a probable DNA-RuvA(4)-RuvB(12)-RuvC(2) complex forms which resolves the HJ. It depends on Mg(2+) as a cofactor.

It is found in the cytoplasm. The catalysed reaction is Endonucleolytic cleavage at a junction such as a reciprocal single-stranded crossover between two homologous DNA duplexes (Holliday junction).. Its function is as follows. The RuvA-RuvB-RuvC complex processes Holliday junction (HJ) DNA during genetic recombination and DNA repair. Endonuclease that resolves HJ intermediates. Cleaves cruciform DNA by making single-stranded nicks across the HJ at symmetrical positions within the homologous arms, yielding a 5'-phosphate and a 3'-hydroxyl group; requires a central core of homology in the junction. The consensus cleavage sequence is 5'-(A/T)TT(C/G)-3'. Cleavage occurs on the 3'-side of the TT dinucleotide at the point of strand exchange. HJ branch migration catalyzed by RuvA-RuvB allows RuvC to scan DNA until it finds its consensus sequence, where it cleaves and resolves the cruciform DNA. In Idiomarina loihiensis (strain ATCC BAA-735 / DSM 15497 / L2-TR), this protein is Crossover junction endodeoxyribonuclease RuvC.